The primary structure comprises 237 residues: MKKQNIPEEILSLITEEEINLFQELQIKIKELNNKTNLTRLTDGDDYWVSQVFDSIWPFKAFTNINFDNKKFLDIGSGCGFPGLAYAITHPNSEIYLIDSLKKKTDAIKFLVKQINFKNNIHVINDRVENLAHQSSMRNNFNIATTRAVSNPSTVSEYILPMLKKEGFGVLYCGKWTNEESKNLDKTLEILEGKVKDKKEIQLPRNKGTRNIILIQPKNFCPEIYPRKVGKPEKNPL.

Residues glycine 76, phenylalanine 81, valine 128 to glutamate 129, and arginine 147 each bind S-adenosyl-L-methionine.

This sequence belongs to the methyltransferase superfamily. RNA methyltransferase RsmG family.

It localises to the cytoplasm. Its function is as follows. Specifically methylates the N7 position of a guanine in 16S rRNA. The protein is Ribosomal RNA small subunit methyltransferase G of Prochlorococcus marinus (strain MIT 9215).